The following is a 58-amino-acid chain: Potassium channel toxin alpha-KTx 16.6 (58 aa).

An N-terminal signal peptide occupies residues 1–22 (MKILSVLLIALIICSINICSEA). Intrachain disulfides connect Cys29–Cys50, Cys35–Cys55, and Cys39–Cys57.

Belongs to the short scorpion toxin superfamily. Potassium channel inhibitor family. Alpha-KTx 16 subfamily. Expressed by the venom gland.

It is found in the secreted. Functionally, inhibits potassium channel. In Buthus israelis (Israeli scorpion), this protein is Potassium channel toxin alpha-KTx 16.6.